We begin with the raw amino-acid sequence, 200 residues long: Holliday junction branch migration complex subunit RuvA (200 aa).

The tract at residues 1–64 is domain I; the sequence is MITSIQGTLV…EDSQTLYGFA (64 aa). The tract at residues 65–144 is domain II; the sequence is SPAERDFFRL…ATGAAPGLAT (80 aa). Residues 145-151 are flexible linker; sequence QPAAAAS. The domain III stretch occupies residues 152-200; sequence PGASAHRDAVAALVALGYRSADADEAVRRASLALGEAATTESLIKKALS.

This sequence belongs to the RuvA family. In terms of assembly, homotetramer. Forms an RuvA(8)-RuvB(12)-Holliday junction (HJ) complex. HJ DNA is sandwiched between 2 RuvA tetramers; dsDNA enters through RuvA and exits via RuvB. An RuvB hexamer assembles on each DNA strand where it exits the tetramer. Each RuvB hexamer is contacted by two RuvA subunits (via domain III) on 2 adjacent RuvB subunits; this complex drives branch migration. In the full resolvosome a probable DNA-RuvA(4)-RuvB(12)-RuvC(2) complex forms which resolves the HJ.

Its subcellular location is the cytoplasm. Its function is as follows. The RuvA-RuvB-RuvC complex processes Holliday junction (HJ) DNA during genetic recombination and DNA repair, while the RuvA-RuvB complex plays an important role in the rescue of blocked DNA replication forks via replication fork reversal (RFR). RuvA specifically binds to HJ cruciform DNA, conferring on it an open structure. The RuvB hexamer acts as an ATP-dependent pump, pulling dsDNA into and through the RuvAB complex. HJ branch migration allows RuvC to scan DNA until it finds its consensus sequence, where it cleaves and resolves the cruciform DNA. This chain is Holliday junction branch migration complex subunit RuvA, found in Opitutus terrae (strain DSM 11246 / JCM 15787 / PB90-1).